The sequence spans 115 residues: Holo-[acyl-carrier-protein] synthase (115 aa).

Aspartate 5 and glutamate 51 together coordinate Mg(2+).

It belongs to the P-Pant transferase superfamily. AcpS family. The cofactor is Mg(2+).

The protein localises to the cytoplasm. The enzyme catalyses apo-[ACP] + CoA = holo-[ACP] + adenosine 3',5'-bisphosphate + H(+). Transfers the 4'-phosphopantetheine moiety from coenzyme A to a Ser of acyl-carrier-protein. This Helicobacter acinonychis (strain Sheeba) protein is Holo-[acyl-carrier-protein] synthase.